Here is a 247-residue protein sequence, read N- to C-terminus: Fibroblast growth factor 14 (247 aa).

Disordered regions lie at residues 1 to 38 (MAAA…KNRG) and 214 to 247 (VGET…SKTT). Residues 15–25 (QAREQHWDRPS) are compositionally biased toward basic and acidic residues.

The protein belongs to the heparin-binding growth factors family. Interacts with SCN8A. As to expression, nervous system.

It is found in the nucleus. Functionally, probably involved in nervous system development and function. The polypeptide is Fibroblast growth factor 14 (FGF14) (Homo sapiens (Human)).